The chain runs to 494 residues: 4-trimethylaminobutyraldehyde dehydrogenase (494 aa).

At Ser2 the chain carries N-acetylserine. Position 30 is an N6-acetyllysine; alternate (Lys30). N6-succinyllysine; alternate is present on Lys30. At Lys59 the chain carries N6-succinyllysine. NAD(+) is bound by residues Lys180 and 232–236; that span reads GSVPT. The active-site Proton acceptor is Glu254. The active-site Nucleophile is Cys288. The residue at position 298 (Lys298) is an N6-acetyllysine. Position 391 (Glu391) interacts with NAD(+).

It belongs to the aldehyde dehydrogenase family. As to quaternary structure, homotetramer. As to expression, detected in lever (at protein level).

Its subcellular location is the cytoplasm. The protein localises to the cytosol. It carries out the reaction 4-(trimethylamino)butanal + NAD(+) + H2O = 4-(trimethylamino)butanoate + NADH + 2 H(+). The enzyme catalyses an aldehyde + NAD(+) + H2O = a carboxylate + NADH + 2 H(+). It catalyses the reaction 4-aminobutanal + NAD(+) + H2O = 4-aminobutanoate + NADH + 2 H(+). The catalysed reaction is formaldehyde + NAD(+) + H2O = formate + NADH + 2 H(+). It carries out the reaction acetaldehyde + NAD(+) + H2O = acetate + NADH + 2 H(+). The enzyme catalyses imidazole-4-acetaldehyde + NAD(+) + H2O = imidazole-4-acetate + NADH + 2 H(+). It catalyses the reaction acrolein + NAD(+) + H2O = acrylate + NADH + 2 H(+). The catalysed reaction is (5-hydroxyindol-3-yl)acetaldehyde + NAD(+) + H2O = (5-hydroxyindol-3-yl)acetate + NADH + 2 H(+). It carries out the reaction 3,4-dihydroxyphenylacetaldehyde + NAD(+) + H2O = 3,4-dihydroxyphenylacetate + NADH + 2 H(+). The enzyme catalyses spermine monoaldehyde + NAD(+) + H2O = N-(2-carboxyethyl)spermidine + NADH + 2 H(+). It catalyses the reaction propanal + NAD(+) + H2O = propanoate + NADH + 2 H(+). The catalysed reaction is butanal + NAD(+) + H2O = butanoate + NADH + 2 H(+). It carries out the reaction pentanal + NAD(+) + H2O = pentanoate + NADH + 2 H(+). The enzyme catalyses hexanal + NAD(+) + H2O = hexanoate + NADH + 2 H(+). It participates in amine and polyamine biosynthesis; carnitine biosynthesis. Functionally, converts gamma-trimethylaminobutyraldehyde into gamma-butyrobetaine with high efficiency (in vitro). Can catalyze the irreversible oxidation of a broad range of aldehydes to the corresponding acids in an NAD-dependent reaction, but with low efficiency. Catalyzes the oxidation of aldehydes arising from biogenic amines and polyamines. The chain is 4-trimethylaminobutyraldehyde dehydrogenase (Aldh9a1) from Rattus norvegicus (Rat).